The following is a 565-amino-acid chain: E3 ubiquitin-protein ligase RNF168 (565 aa).

An RING-type zinc finger spans residues 16 to 55 (CGICMEILLEPVTLPCNHTLCNPCFQSTVEKANLCCPFCR). A Phosphoserine modification is found at serine 70. An LR motif 1 motif is present at residues 110-128 (LSEPGELRREYEEEISRVE). The residue at position 134 (serine 134) is a Phosphoserine. The UMI motif motif lies at 143 to 151 (EEYIQRLLA). Disordered regions lie at residues 150 to 223 (LAEE…KTFG) and 252 to 302 (SKET…PQLC). A compositionally biased stretch (basic and acidic residues) spans 157–179 (EKRQREKRRSEMEEQLRGDEELA). The MIU motif 1 motif lies at 168-191 (MEEQLRGDEELARSLSTSINSNYE). Positions 181 to 201 (SLSTSINSNYERNTLASPLSS) are enriched in polar residues. The residue at position 197 (serine 197) is a Phosphoserine. Lysine 210 is covalently cross-linked (Glycyl lysine isopeptide (Lys-Gly) (interchain with G-Cter in SUMO2)). Polar residues predominate over residues 275 to 293 (PTLSPQTCLETQEQGSESS). A phosphoserine mark is found at serine 413 and serine 414. The MIU motif 2 motif lies at 438–461 (RHKQEEQDRLLALQLQKEVDKEQM). The tract at residues 458–521 (KEQMVPNRQK…TKGDYWEPFK (64 aa)) is disordered. Positions 465-476 (RQKGSPDQYQLR) match the LR motif 2 motif. The span at 466 to 477 (QKGSPDQYQLRT) shows a compositional bias: polar residues. Position 469 is a phosphoserine (serine 469). Positions 504–518 (DHSKSPRNTKGDYWE) are enriched in basic and acidic residues. Lysine 525 participates in a covalent cross-link: Glycyl lysine isopeptide (Lys-Gly) (interchain with G-Cter in SUMO2).

It belongs to the RNF168 family. As to quaternary structure, monomer. Interacts with UBE2N/UBC13. Post-translationally, sumoylated with SUMO1 by PIAS4 in response to double-strand breaks (DSBs). In terms of processing, ubiquitinated.

The protein resides in the nucleus. The catalysed reaction is S-ubiquitinyl-[E2 ubiquitin-conjugating enzyme]-L-cysteine + [acceptor protein]-L-lysine = [E2 ubiquitin-conjugating enzyme]-L-cysteine + N(6)-ubiquitinyl-[acceptor protein]-L-lysine.. It participates in protein modification; protein ubiquitination. Functionally, E3 ubiquitin-protein ligase required for accumulation of repair proteins to sites of DNA damage. Acts with UBE2N/UBC13 to amplify the RNF8-dependent histone ubiquitination. Recruited to sites of DNA damage at double-strand breaks (DSBs) by binding to ubiquitinated histone H2A and H2AX and amplifies the RNF8-dependent H2A ubiquitination, promoting the formation of 'Lys-63'-linked ubiquitin conjugates. This leads to concentrate ubiquitinated histones H2A and H2AX at DNA lesions to the threshold required for recruitment of TP53BP1 and BRCA1. Also recruited at DNA interstrand cross-links (ICLs) sites and promotes accumulation of 'Lys-63'-linked ubiquitination of histones H2A and H2AX, leading to recruitment of FAAP20 and Fanconi anemia (FA) complex, followed by interstrand cross-link repair. H2A ubiquitination also mediates the ATM-dependent transcriptional silencing at regions flanking DSBs in cis, a mechanism to avoid collision between transcription and repair intermediates. Also involved in class switch recombination in immune system, via its role in regulation of DSBs repair. Following DNA damage, promotes the ubiquitination and degradation of JMJD2A/KDM4A in collaboration with RNF8, leading to unmask H4K20me2 mark and promote the recruitment of TP53BP1 at DNA damage sites. Not able to initiate 'Lys-63'-linked ubiquitination in vitro; possibly due to partial occlusion of the UBE2N/UBC13-binding region. Catalyzes monoubiquitination of 'Lys-13' and 'Lys-15' of nucleosomal histone H2A (H2AK13Ub and H2AK15Ub, respectively). The protein is E3 ubiquitin-protein ligase RNF168 of Mus musculus (Mouse).